The primary structure comprises 820 residues: Protein bicaudal D homolog 2 (820 aa).

S2 carries the post-translational modification N-acetylserine. The stretch at 20 to 270 (EWLRAEVKRL…LSHYMSINDS (251 aa)) forms a coiled coil. The interaction with DYNLL1, DYNC1H1, DYNC1I2, DCTN1 and DCTN2 stretch occupies residues 25 to 400 (EVKRLSHELA…RLTENLSALR (376 aa)). Phosphoserine is present on residues S190, S224, and S320. The tract at residues 313-332 (SSLDNKTSTPRKDGLAPPSP) is disordered. A Phosphothreonine modification is found at T321. The tract at residues 336-595 (SDLLSELHIS…LLATEVGRAD (260 aa)) is interaction with KIF5A. Positions 340–539 (SELHISEIQK…VTFSEELANL (200 aa)) form a coiled coil. Phosphoserine is present on residues S345 and S397. 4 disordered regions span residues 400-427 (RRLQAGKERQTSLDNEKDRDSHEDGDYY), 563-582 (QGKAGRTSPEGRGRRSPVLL), 591-618 (VGRADGGTGDNSPSPSSSLPSPLSDPRR), and 799-820 (HEQTRRGRSKAASKAKPASPSL). Positions 404–424 (AGKERQTSLDNEKDRDSHEDG) are enriched in basic and acidic residues. Residues S570 and S578 each carry the phosphoserine modification. The interaction with RANBP2 stretch occupies residues 586–820 (LLATEVGRAD…SKAKPASPSL (235 aa)). T598 bears the Phosphothreonine mark. Low complexity predominate over residues 602 to 614 (SPSPSSSLPSPLS). The stretch at 662 to 804 (DKDKEALMEE…LELDHEQTRR (143 aa)) forms a coiled coil. Residues 662-810 (DKDKEALMEE…QTRRGRSKAA (149 aa)) form an interaction with RAB6A region. S819 carries the phosphoserine modification.

It belongs to the BicD family. In terms of assembly, part of a tripartite complex with dynein and dynactin, acts an adapter linking the dynein motor complex and dynactin. Interacts with CPNE4 (via VWFA domain). Interacts with NEK9. Interacts with DCTN2. Interacts with RAB6A. Interacts with DNAI1. Interacts with DYNLL1, DYNC1H1, DYNC1I2 and DCTN1. Forms a complex with dynein and dynactin. The dynein-dynactin-BICD2 ternary complex (DDB) binds preferentially to tyrosinated microtubules than to detyrosinated microtubules. Interacts with RANBP2, RAB6A and KIF5A. Interacts with KIF1C. Phosphorylated by NEK9 in vitro. Ubiquitously expressed with high expression in the spinal cord.

It localises to the golgi apparatus. Its subcellular location is the cytoplasm. The protein localises to the cytoskeleton. It is found in the nucleus. The protein resides in the nuclear pore complex. It localises to the nucleus envelope. Its function is as follows. Acts as an adapter protein linking the dynein motor complex to various cargos and converts dynein from a non-processive to a highly processive motor in the presence of dynactin. Facilitates and stabilizes the interaction between dynein and dynactin and activates dynein processivity (the ability to move along a microtubule for a long distance without falling off the track). Facilitates the binding of RAB6A to the Golgi by stabilizing its GTP-bound form. Regulates coat complex coatomer protein I (COPI)-independent Golgi-endoplasmic reticulum transport via its interaction with RAB6A and recruitment of the dynein-dynactin motor complex. Contributes to nuclear and centrosomal positioning prior to mitotic entry through regulation of both dynein and kinesin-1. During G2 phase of the cell cycle, associates with RANBP2 at the nuclear pores and recruits dynein and dynactin to the nuclear envelope to ensure proper positioning of the nucleus relative to centrosomes prior to the onset of mitosis. This chain is Protein bicaudal D homolog 2 (Bicd2), found in Mus musculus (Mouse).